A 478-amino-acid polypeptide reads, in one-letter code: ATP synthase subunit beta (478 aa).

151 to 158 (GGAGVGKT) contributes to the ATP binding site.

The protein belongs to the ATPase alpha/beta chains family. F-type ATPases have 2 components, CF(1) - the catalytic core - and CF(0) - the membrane proton channel. CF(1) has five subunits: alpha(3), beta(3), gamma(1), delta(1), epsilon(1). CF(0) has three main subunits: a(1), b(2) and c(9-12). The alpha and beta chains form an alternating ring which encloses part of the gamma chain. CF(1) is attached to CF(0) by a central stalk formed by the gamma and epsilon chains, while a peripheral stalk is formed by the delta and b chains.

The protein resides in the cell inner membrane. It catalyses the reaction ATP + H2O + 4 H(+)(in) = ADP + phosphate + 5 H(+)(out). Functionally, produces ATP from ADP in the presence of a proton gradient across the membrane. The catalytic sites are hosted primarily by the beta subunits. In Xanthobacter autotrophicus (strain ATCC BAA-1158 / Py2), this protein is ATP synthase subunit beta.